The primary structure comprises 388 residues: Chorismate synthase (388 aa).

Residues R39 and R45 each contribute to the NADP(+) site. Residues 132-134 (RSS), 251-252 (NA), G296, 311-315 (KPIPT), and R337 contribute to the FMN site.

In terms of assembly, homotetramer. It depends on FMNH2 as a cofactor.

The catalysed reaction is 5-O-(1-carboxyvinyl)-3-phosphoshikimate = chorismate + phosphate. It functions in the pathway metabolic intermediate biosynthesis; chorismate biosynthesis; chorismate from D-erythrose 4-phosphate and phosphoenolpyruvate: step 7/7. Catalyzes the anti-1,4-elimination of the C-3 phosphate and the C-6 proR hydrogen from 5-enolpyruvylshikimate-3-phosphate (EPSP) to yield chorismate, which is the branch point compound that serves as the starting substrate for the three terminal pathways of aromatic amino acid biosynthesis. This reaction introduces a second double bond into the aromatic ring system. In Staphylococcus aureus, this protein is Chorismate synthase.